Reading from the N-terminus, the 389-residue chain is Probable zinc transporter zip2 (389 aa).

The next 7 membrane-spanning stretches (helical) occupy residues 6 to 26, 48 to 68, 88 to 108, 267 to 289, 305 to 325, 329 to 349, and 368 to 388; these read GWILSLSINAFCVFGASGIYL, LVTGLATSSGILLYSSWASVM, VFQFCAFFFGGIVFYIFNHFL, VLVAMSIHNIVEGFTIAYPLYLA, SCSLPLGSLIAFLVMEAGGIG, FLNFLYGIIFAGTAGMMLILS, and HSFICFTIGILFTLFLEIFDS.

This sequence belongs to the ZIP transporter (TC 2.A.5) family.

It is found in the endoplasmic reticulum membrane. Probable zinc transporter that may mediate zinc remobilization from the endoplasmic reticulum under zinc limitation. The polypeptide is Probable zinc transporter zip2 (zip2) (Schizosaccharomyces pombe (strain 972 / ATCC 24843) (Fission yeast)).